We begin with the raw amino-acid sequence, 173 residues long: Catabolic 3-dehydroquinase (173 aa).

Y26 functions as the Proton acceptor in the catalytic mechanism. Positions 102, 108, and 115 each coordinate substrate. H128 functions as the Proton donor in the catalytic mechanism. Residues 129-130 (VS) and R139 each bind substrate.

This sequence belongs to the type-II 3-dehydroquinase family. Homododecamer. Adopts a ring-like structure, composed of an arrangement of two hexameric rings stacked on top of one another.

The catalysed reaction is 3-dehydroquinate = 3-dehydroshikimate + H2O. Its pathway is aromatic compound metabolism; 3,4-dihydroxybenzoate biosynthesis; 3,4-dihydroxybenzoate from 3-dehydroquinate: step 1/2. In terms of biological role, 3-dehydroquinate dehydratase; part of the qa gene cluster that mediates the catabolism of quinic acid (QA) and as such, allows the use of QA as a sole carbon source. Catalyzes the second reaction in the inducible quinic acid catabolic pathway by converting 3-dehydroquinate into 3-dehydroshikimate. The qa cluster encodes 3 inducible enymes (qa-2, qa-3 and qa-4) catalyzing the first three reactions in the catabolism of quinic acid to protocatechuic acid (also known as 3,4-Dihydroxybenzoic acid). The polypeptide is Catabolic 3-dehydroquinase (Neurospora crassa (strain ATCC 24698 / 74-OR23-1A / CBS 708.71 / DSM 1257 / FGSC 987)).